Here is a 183-residue protein sequence, read N- to C-terminus: Endoribonuclease YbeY (183 aa).

Positions 142, 146, and 152 each coordinate Zn(2+).

Belongs to the endoribonuclease YbeY family. Zn(2+) is required as a cofactor.

The protein localises to the cytoplasm. Single strand-specific metallo-endoribonuclease involved in late-stage 70S ribosome quality control and in maturation of the 3' terminus of the 16S rRNA. In Trichodesmium erythraeum (strain IMS101), this protein is Endoribonuclease YbeY.